The chain runs to 326 residues: 4-hydroxythreonine-4-phosphate dehydrogenase (326 aa).

Positions 133 and 134 each coordinate substrate. 3 residues coordinate a divalent metal cation: H163, H208, and H263. 3 residues coordinate substrate: K271, N280, and R289.

Belongs to the PdxA family. In terms of assembly, homodimer. Zn(2+) serves as cofactor. Mg(2+) is required as a cofactor. The cofactor is Co(2+).

It localises to the cytoplasm. It catalyses the reaction 4-(phosphooxy)-L-threonine + NAD(+) = 3-amino-2-oxopropyl phosphate + CO2 + NADH. It participates in cofactor biosynthesis; pyridoxine 5'-phosphate biosynthesis; pyridoxine 5'-phosphate from D-erythrose 4-phosphate: step 4/5. In terms of biological role, catalyzes the NAD(P)-dependent oxidation of 4-(phosphooxy)-L-threonine (HTP) into 2-amino-3-oxo-4-(phosphooxy)butyric acid which spontaneously decarboxylates to form 3-amino-2-oxopropyl phosphate (AHAP). The protein is 4-hydroxythreonine-4-phosphate dehydrogenase of Pseudoalteromonas atlantica (strain T6c / ATCC BAA-1087).